We begin with the raw amino-acid sequence, 593 residues long: Histone-arginine methyltransferase CARMER (593 aa).

The 308-residue stretch at 122-429 (ASQYFQFYGY…QRQSYDVEMD (308 aa)) folds into the SAM-dependent MTase PRMT-type domain. Positions 135, 144, 168, 190, 219, and 247 each coordinate S-adenosyl-L-methionine. Residue Arg482 is modified to Asymmetric dimethylarginine; by autocatalysis. The interval 521–540 (LISSTGRQQSQQQTTPAQPL) is disordered. Positions 523–535 (SSTGRQQSQQQTT) are enriched in low complexity.

The protein belongs to the class I-like SAM-binding methyltransferase superfamily. Protein arginine N-methyltransferase family. Homodimer. The dimethylated protein is the major form.

The protein localises to the cytoplasm. It localises to the nucleus. The catalysed reaction is L-arginyl-[protein] + 2 S-adenosyl-L-methionine = N(omega),N(omega)-dimethyl-L-arginyl-[protein] + 2 S-adenosyl-L-homocysteine + 2 H(+). Methylates (mono- and asymmetric dimethylation) the guanidino nitrogens of arginyl residues in proteins. May methylate histone H3 at 'Arg-17' and activate transcription via chromatin remodeling. The protein is Histone-arginine methyltransferase CARMER of Aedes aegypti (Yellowfever mosquito).